Here is a 195-residue protein sequence, read N- to C-terminus: Flagellar transcriptional regulator FlhC (195 aa).

Residues Cys137, Cys140, Cys157, and Cys160 each contribute to the Zn(2+) site. The segment at 165–195 (RAGSARRKTTTRKAVAPTHKTTAASRKAVVA) is disordered.

The protein belongs to the FlhC family. Heterohexamer composed of two FlhC and four FlhD subunits. Each FlhC binds a FlhD dimer, forming a heterotrimer, and a hexamer assembles by dimerization of two heterotrimers. It depends on Zn(2+) as a cofactor.

The protein resides in the cytoplasm. In terms of biological role, functions in complex with FlhD as a master transcriptional regulator that regulates transcription of several flagellar and non-flagellar operons by binding to their promoter region. Activates expression of class 2 flagellar genes, including fliA, which is a flagellum-specific sigma factor that turns on the class 3 genes. Also regulates genes whose products function in a variety of physiological pathways. The polypeptide is Flagellar transcriptional regulator FlhC (Thauera aminoaromatica).